The primary structure comprises 166 residues: Cytochrome c-550 2 (166 aa).

The first 32 residues, 1-32 (MFSRQFGRLATLALALAVAGCAGGEQSTTAEA), serve as a signal peptide directing secretion. Heme c contacts are provided by C71, C74, and H75.

It belongs to the cytochrome c family. PsbV subfamily. It depends on heme c as a cofactor.

The protein resides in the cell inner membrane. Functionally, probable low-potential cytochrome c, might function in photosystem II (PSII). The sequence is that of Cytochrome c-550 2 (psbV2) from Gloeobacter violaceus (strain ATCC 29082 / PCC 7421).